A 166-amino-acid polypeptide reads, in one-letter code: HTH-type transcriptional regulator PrsX (166 aa).

The HTH marR-type domain occupies 25-159 (EHLLMQLCIR…FEVINKKLLA (135 aa)).

It is found in the cytoplasm. This Escherichia coli O6:H1 (strain CFT073 / ATCC 700928 / UPEC) protein is HTH-type transcriptional regulator PrsX (prsX).